A 342-amino-acid polypeptide reads, in one-letter code: Pre-mRNA-splicing factor 18 (342 aa).

M1 carries the post-translational modification N-acetylmethionine.

The protein belongs to the PRP18 family. In terms of assembly, heterodimer with PPIH. Interacts with PRPF4 and with the spliceosome. Part of a complex containing U4/U6 snRNPs. Also detected in the cytoplasm. Detected in brain, heart, liver and skeletal muscle.

The protein localises to the nucleus speckle. Functionally, participates in the second step of pre-mRNA splicing. Down-regulates the expression of potassium channel subunits. This chain is Pre-mRNA-splicing factor 18 (Prpf18), found in Rattus norvegicus (Rat).